A 368-amino-acid chain; its full sequence is 3-isopropylmalate dehydrogenase (368 aa).

79 to 91 (GPEWGTSSTVRPE) contacts NAD(+). Arg98, Arg108, Arg137, and Asp226 together coordinate substrate. Mg(2+) contacts are provided by Asp226, Asp251, and Asp255. 291-303 (GSAPDISGKGIVN) contacts NAD(+).

Belongs to the isocitrate and isopropylmalate dehydrogenases family. As to quaternary structure, homodimer. Mg(2+) serves as cofactor. The cofactor is Mn(2+).

The protein resides in the cytoplasm. It catalyses the reaction (2R,3S)-3-isopropylmalate + NAD(+) = 4-methyl-2-oxopentanoate + CO2 + NADH. The protein operates within amino-acid biosynthesis; L-leucine biosynthesis; L-leucine from 3-methyl-2-oxobutanoate: step 3/4. In terms of biological role, catalyzes the oxidation of 3-carboxy-2-hydroxy-4-methylpentanoate (3-isopropylmalate) to 3-carboxy-4-methyl-2-oxopentanoate. The product decarboxylates to 4-methyl-2 oxopentanoate. The protein is 3-isopropylmalate dehydrogenase (leu-1) of Neurospora crassa (strain ATCC 24698 / 74-OR23-1A / CBS 708.71 / DSM 1257 / FGSC 987).